A 295-amino-acid chain; its full sequence is Small ribosomal subunit biogenesis GTPase RsgA (295 aa).

In terms of domain architecture, CP-type G spans 68 to 228 (KNLLVKPHVA…VVDTPGFANL (161 aa)). GTP contacts are provided by residues 117 to 120 (NKMD) and 170 to 178 (GLSGVGKSS). The Zn(2+) site is built by cysteine 250, cysteine 255, histidine 257, and cysteine 263.

The protein belongs to the TRAFAC class YlqF/YawG GTPase family. RsgA subfamily. Monomer. Associates with 30S ribosomal subunit, binds 16S rRNA. The cofactor is Zn(2+).

The protein resides in the cytoplasm. One of several proteins that assist in the late maturation steps of the functional core of the 30S ribosomal subunit. Helps release RbfA from mature subunits. May play a role in the assembly of ribosomal proteins into the subunit. Circularly permuted GTPase that catalyzes slow GTP hydrolysis, GTPase activity is stimulated by the 30S ribosomal subunit. The protein is Small ribosomal subunit biogenesis GTPase RsgA of Thermotoga neapolitana (strain ATCC 49049 / DSM 4359 / NBRC 107923 / NS-E).